We begin with the raw amino-acid sequence, 393 residues long: Lipid-A-disaccharide synthase (393 aa).

The protein belongs to the LpxB family.

It carries out the reaction a lipid X + a UDP-2-N,3-O-bis[(3R)-3-hydroxyacyl]-alpha-D-glucosamine = a lipid A disaccharide + UDP + H(+). It functions in the pathway bacterial outer membrane biogenesis; LPS lipid A biosynthesis. In terms of biological role, condensation of UDP-2,3-diacylglucosamine and 2,3-diacylglucosamine-1-phosphate to form lipid A disaccharide, a precursor of lipid A, a phosphorylated glycolipid that anchors the lipopolysaccharide to the outer membrane of the cell. This chain is Lipid-A-disaccharide synthase, found in Colwellia psychrerythraea (strain 34H / ATCC BAA-681) (Vibrio psychroerythus).